A 185-amino-acid chain; its full sequence is Putative tyrosine-protein phosphatase OCA1 (185 aa).

The Tyrosine-protein phosphatase domain maps to Asn-18–Ser-178. The active-site Phosphocysteine intermediate is the Cys-116.

This sequence belongs to the protein-tyrosine phosphatase family.

Its subcellular location is the cytoplasm. It carries out the reaction O-phospho-L-tyrosyl-[protein] + H2O = L-tyrosyl-[protein] + phosphate. Its function is as follows. Putative tyrosine-protein phosphatase required for protection against superoxide stress. The chain is Putative tyrosine-protein phosphatase OCA1 (OCA1) from Meyerozyma guilliermondii (strain ATCC 6260 / CBS 566 / DSM 6381 / JCM 1539 / NBRC 10279 / NRRL Y-324) (Yeast).